Consider the following 957-residue polypeptide: Valine--tRNA ligase (957 aa).

Residues 42 to 52 (PNVTGSLHMGH) carry the 'HIGH' region motif. The 'KMSKS' region motif lies at 554–558 (KMSKS). Lys-557 serves as a coordination point for ATP. Residues 890–956 (DKDAELARLA…LEAQQETIAA (67 aa)) are a coiled coil.

The protein belongs to the class-I aminoacyl-tRNA synthetase family. ValS type 1 subfamily. In terms of assembly, monomer.

Its subcellular location is the cytoplasm. It carries out the reaction tRNA(Val) + L-valine + ATP = L-valyl-tRNA(Val) + AMP + diphosphate. Functionally, catalyzes the attachment of valine to tRNA(Val). As ValRS can inadvertently accommodate and process structurally similar amino acids such as threonine, to avoid such errors, it has a 'posttransfer' editing activity that hydrolyzes mischarged Thr-tRNA(Val) in a tRNA-dependent manner. In Aliivibrio fischeri (strain ATCC 700601 / ES114) (Vibrio fischeri), this protein is Valine--tRNA ligase.